A 1091-amino-acid polypeptide reads, in one-letter code: ATPase family AAA domain-containing protein 2 (1091 aa).

The tract at residues 32–211 is disordered; that stretch reads LEDLGVFNET…HFERRRKRSR (180 aa). The segment covering 53-62 has biased composition (basic and acidic residues); the sequence is KQKDIQRTDE. Acidic residues predominate over residues 74 to 119; it reads SSEEGEDQEHEDDGEDEDDEDEDDDDDDDDDDDDDEDDEDEEDGEE. Lysine 148 participates in a covalent cross-link: Glycyl lysine isopeptide (Lys-Gly) (interchain with G-Cter in SUMO2). Phosphoserine occurs at positions 158, 168, 173, and 241. ATP is bound at residue 298-305; the sequence is GPPGTGKT. Serine 577 and serine 582 each carry phosphoserine. Coiled-coil stretches lie at residues 801 to 825 and 917 to 943; these read LTAE…IFLR and YAII…KKRG. One can recognise a Bromo domain in the interval 811–923; sequence EQEEDTFREL…DTAYAIIKEE (113 aa). Lysine 959 participates in a covalent cross-link: Glycyl lysine isopeptide (Lys-Gly) (interchain with G-Cter in SUMO2). The segment at 961 to 985 is disordered; it reads NSTLVGDKRSDPEQNEKLKTPSTPV. The span at 966 to 979 shows a compositional bias: basic and acidic residues; sequence GDKRSDPEQNEKLK. Serine 970 carries the post-translational modification Phosphoserine. Lysine 979 is covalently cross-linked (Glycyl lysine isopeptide (Lys-Gly) (interchain with G-Cter in SUMO2)). 2 positions are modified to phosphothreonine: threonine 980 and threonine 983. Serine 1003 carries the post-translational modification Phosphoserine. A Phosphothreonine modification is found at threonine 1024.

This sequence belongs to the AAA ATPase family. In terms of assembly, interaction with ESR1 and NCOA3 is enhanced by estradiol. Interacts with acetylated lysine residues on histone H1.4, H2A, H2B and H3 (in vitro).

The protein resides in the nucleus. It carries out the reaction ATP + H2O = ADP + phosphate + H(+). Functionally, may be a transcriptional coactivator of the nuclear receptor ESR1 required to induce the expression of a subset of estradiol target genes, such as CCND1, MYC and E2F1. May play a role in the recruitment or occupancy of CREBBP at some ESR1 target gene promoters. May be required for histone hyperacetylation. The protein is ATPase family AAA domain-containing protein 2 (ATAD2) of Pongo abelii (Sumatran orangutan).